The following is a 958-amino-acid chain: Isoleucine--tRNA ligase (958 aa).

The interval 1 to 32 (MSDNQNKPGKPAAKPQSKYPVNMTDTPFPMRG) is disordered. A 'HIGH' region motif is present at residues 71–81 (PYANGDIHLGH). L-isoleucyl-5'-AMP is bound at residue glutamate 590. Residues 631–635 (KMSKS) carry the 'KMSKS' region motif. Lysine 634 lines the ATP pocket. Zn(2+) contacts are provided by cysteine 921, cysteine 924, cysteine 941, and cysteine 944.

Belongs to the class-I aminoacyl-tRNA synthetase family. IleS type 1 subfamily. Monomer. Requires Zn(2+) as cofactor.

It localises to the cytoplasm. It carries out the reaction tRNA(Ile) + L-isoleucine + ATP = L-isoleucyl-tRNA(Ile) + AMP + diphosphate. Its function is as follows. Catalyzes the attachment of isoleucine to tRNA(Ile). As IleRS can inadvertently accommodate and process structurally similar amino acids such as valine, to avoid such errors it has two additional distinct tRNA(Ile)-dependent editing activities. One activity is designated as 'pretransfer' editing and involves the hydrolysis of activated Val-AMP. The other activity is designated 'posttransfer' editing and involves deacylation of mischarged Val-tRNA(Ile). The sequence is that of Isoleucine--tRNA ligase from Janthinobacterium sp. (strain Marseille) (Minibacterium massiliensis).